A 1118-amino-acid chain; its full sequence is Constitutive coactivator of PPAR-gamma-like protein 1 (1118 aa).

The segment at 339 to 405 is interaction with YES1, SRC and FYN; the sequence is PPHYLAARPG…SLSEPAPLTL (67 aa). The interval 374 to 533 is disordered; sequence AKPVAPQVPS…GTVQPIPCLL (160 aa). The span at 376–396 shows a compositional bias: low complexity; the sequence is PVAPQVPSPGGAPGQGPYPYS. 2 stretches are compositionally biased toward polar residues: residues 405–420 and 435–447; these read LDTS…SYSN and SPIN…SPNH. Residues 481 to 502 show a composition bias toward basic and acidic residues; sequence GWEKTGSHSEPQARGDPGDQTK. Residues 503-514 show a composition bias toward polar residues; it reads AEGSSTASSGSQ. Residue Thr-655 is modified to Phosphothreonine. Positions 829–1118 are RNA binding; sequence ADQAAKVEKM…LEAAVLNKEE (290 aa). Residues Arg-873, Arg-884, and Arg-886 each carry the omega-N-methylarginine modification. The disordered stretch occupies residues 921-945; sequence AFSGSDSSRTSKSQGGVQPIPSQGG. Residues 924–936 are compositionally biased toward polar residues; it reads GSDSSRTSKSQGG. N6-acetyllysine is present on Lys-932. Phosphoserine is present on Ser-960. An omega-N-methylarginine mark is found at Arg-982 and Arg-986. Position 1023 is a phosphoserine (Ser-1023). The interval 1025–1102 is disordered; the sequence is EEVAKELKSK…HLNALSTDSA (78 aa). Over residues 1026–1037 the composition is skewed to basic and acidic residues; sequence EVAKELKSKSGE. Residues 1038-1051 show a composition bias toward low complexity; sequence SKSSAMSSDGSLAE. A phosphoserine mark is found at Ser-1044, Ser-1045, and Ser-1048. The span at 1076–1101 shows a compositional bias: polar residues; sequence HSESALNNDSKTCNTNPHLNALSTDS.

Belongs to the constitutive coactivator of PPAR-gamma family. In terms of assembly, interacts with PURA. Interacts with SRC family protein kinases YES1, SRC and FYN. Upon tyrosine phosphorylation, interacts with PIK3R1. Interacts with IGF2BP1/IMP-1 in an RNA-dependent manner. Post-translationally, arg-982 is dimethylated, probably to asymmetric dimethylarginine. Phosphorylated on tyrosine by SRC family protein kinases upon oxidative stress, for instance following UV irradiation. In terms of tissue distribution, widely expressed. In gastric mucosa, detected in the bottom region of the foveolar epithelium (at protein level).

It is found in the cytoplasm. The protein localises to the cell membrane. Functionally, component of the oxidative stress-induced survival signaling. May regulate the activation of SRC family protein kinases. May act as a scaffolding protein enabling SRC family protein kinases to phosphorylate and activate PI3-kinase. Binds IGF2 RNA and promotes the production of IGF2 protein. The chain is Constitutive coactivator of PPAR-gamma-like protein 1 (FAM120A) from Homo sapiens (Human).